Reading from the N-terminus, the 289-residue chain is Arabinogalactan O-methyltransferase 1 (289 aa).

Residues 12-32 (IITGVLLAGLVGGALLFTSFI) traverse the membrane as a helical segment.

The protein belongs to the methyltransferase superfamily. Binds to the translation initiation factors TIF3E1.

The protein localises to the golgi apparatus membrane. Involved in the methylation of glucuronic acid of different plant cell wall component, but mainly on side chains of arabinogalactans. In Arabidopsis thaliana (Mouse-ear cress), this protein is Arabinogalactan O-methyltransferase 1 (AGM1).